The following is a 250-amino-acid chain: Probable S-methyl-5'-thioinosine phosphorylase (250 aa).

Phosphate contacts are provided by residues Thr-14 and 56–57; that span reads RH. Met-189 is a substrate binding site. Thr-190 serves as a coordination point for phosphate. 213–215 lines the substrate pocket; the sequence is NWA.

The protein belongs to the PNP/MTAP phosphorylase family. MTAP subfamily. Homotrimer.

It catalyses the reaction S-methyl-5'-thioinosine + phosphate = 5-(methylsulfanyl)-alpha-D-ribose 1-phosphate + hypoxanthine. The protein operates within purine metabolism; purine nucleoside salvage. In terms of biological role, catalyzes the reversible phosphorylation of S-methyl-5'-thioinosine (MTI) to hypoxanthine and 5-methylthioribose-1-phosphate. Involved in the breakdown of S-methyl-5'-thioadenosine (MTA), a major by-product of polyamine biosynthesis. Catabolism of (MTA) occurs via deamination to MTI and phosphorolysis to hypoxanthine. In Xanthomonas campestris pv. campestris (strain ATCC 33913 / DSM 3586 / NCPPB 528 / LMG 568 / P 25), this protein is Probable S-methyl-5'-thioinosine phosphorylase.